The following is a 298-amino-acid chain: Mitochondrial 2-oxodicarboxylate carrier (298 aa).

3 Solcar repeats span residues 10–99 (HETC…YKKF), 106–195 (SPGL…VKDN), and 204–293 (LEFL…TYAW). A run of 6 helical transmembrane segments spans residues 16-36 (VAAG…LDVV), 69-88 (FGFY…KRAV), 112-132 (PIAG…FEVV), 166-186 (GLNK…MTYF), 204-224 (LEFL…SVFN), and 276-296 (LGPG…WLQE).

Belongs to the mitochondrial carrier (TC 2.A.29) family. As to expression, widely expressed.

It is found in the mitochondrion inner membrane. It catalyses the reaction 2-oxoadipate(in) + 2-oxoglutarate(out) = 2-oxoadipate(out) + 2-oxoglutarate(in). It carries out the reaction hexanedioate(in) + 2-oxoglutarate(out) = hexanedioate(out) + 2-oxoglutarate(in). The enzyme catalyses L-2-aminoadipate(in) + 2-oxoglutarate(out) = L-2-aminoadipate(out) + 2-oxoglutarate(in). The catalysed reaction is glutarate(in) + 2-oxoglutarate(out) = glutarate(out) + 2-oxoglutarate(in). It catalyses the reaction 2-oxoheptanedioate(in) + 2-oxoglutarate(out) = 2-oxoheptanedioate(out) + 2-oxoglutarate(in). It carries out the reaction heptanedioate(in) + 2-oxoglutarate(out) = heptanedioate(out) + 2-oxoglutarate(in). The enzyme catalyses citrate(in) + 2-oxoglutarate(out) = citrate(out) + 2-oxoglutarate(in). In terms of biological role, transports dicarboxylates across the inner membranes of mitochondria by a counter-exchange mechanism. Can transport 2-oxoadipate (2-oxohexanedioate), 2-oxoglutarate, adipate (hexanedioate), glutarate, and to a lesser extent, pimelate (heptanedioate), 2-oxopimelate (2-oxoheptanedioate), 2-aminoadipate (2-aminohexanedioate), oxaloacetate, and citrate. Plays a central role in catabolism of lysine, hydroxylysine, and tryptophan, by transporting common metabolite intermediates (such as 2-oxoadipate) into the mitochondria, where it is converted into acetyl-CoA and can enter the citric acid (TCA) cycle. The chain is Mitochondrial 2-oxodicarboxylate carrier (Slc25a21) from Rattus norvegicus (Rat).